Reading from the N-terminus, the 455-residue chain is Bifunctional protein GlmU (455 aa).

The pyrophosphorylase stretch occupies residues 1–226; that stretch reads MGLSVVILAA…EFEILGVNDR (226 aa). UDP-N-acetyl-alpha-D-glucosamine-binding positions include 8 to 11, K22, Q73, 78 to 79, 99 to 101, G136, E151, N166, and N224; these read LAAG, GT, and YGD. D101 lines the Mg(2+) pocket. N224 lines the Mg(2+) pocket. The segment at 227–247 is linker; sequence TQLASLERVWQRNVAEKIMAK. Positions 248 to 455 are N-acetyltransferase; sequence GVSIADPNRF…WQRSVKKTDK (208 aa). The UDP-N-acetyl-alpha-D-glucosamine site is built by R330 and K348. H360 (proton acceptor) is an active-site residue. 2 residues coordinate UDP-N-acetyl-alpha-D-glucosamine: Y363 and N374. Acetyl-CoA-binding positions include A377, 383–384, S402, A420, and R437; that span reads NY.

The protein in the N-terminal section; belongs to the N-acetylglucosamine-1-phosphate uridyltransferase family. This sequence in the C-terminal section; belongs to the transferase hexapeptide repeat family. As to quaternary structure, homotrimer. Mg(2+) serves as cofactor.

The protein localises to the cytoplasm. The enzyme catalyses alpha-D-glucosamine 1-phosphate + acetyl-CoA = N-acetyl-alpha-D-glucosamine 1-phosphate + CoA + H(+). It carries out the reaction N-acetyl-alpha-D-glucosamine 1-phosphate + UTP + H(+) = UDP-N-acetyl-alpha-D-glucosamine + diphosphate. It participates in nucleotide-sugar biosynthesis; UDP-N-acetyl-alpha-D-glucosamine biosynthesis; N-acetyl-alpha-D-glucosamine 1-phosphate from alpha-D-glucosamine 6-phosphate (route II): step 2/2. It functions in the pathway nucleotide-sugar biosynthesis; UDP-N-acetyl-alpha-D-glucosamine biosynthesis; UDP-N-acetyl-alpha-D-glucosamine from N-acetyl-alpha-D-glucosamine 1-phosphate: step 1/1. Its pathway is bacterial outer membrane biogenesis; LPS lipid A biosynthesis. In terms of biological role, catalyzes the last two sequential reactions in the de novo biosynthetic pathway for UDP-N-acetylglucosamine (UDP-GlcNAc). The C-terminal domain catalyzes the transfer of acetyl group from acetyl coenzyme A to glucosamine-1-phosphate (GlcN-1-P) to produce N-acetylglucosamine-1-phosphate (GlcNAc-1-P), which is converted into UDP-GlcNAc by the transfer of uridine 5-monophosphate (from uridine 5-triphosphate), a reaction catalyzed by the N-terminal domain. The chain is Bifunctional protein GlmU from Francisella tularensis subsp. holarctica (strain OSU18).